The primary structure comprises 302 residues: Nitric oxide synthase-interacting protein (302 aa).

Position 36 is a phosphoserine (Ser36). The segment at 55 to 75 is U-box-like; the sequence is DPVVTPDGYLYEREAILEYIL. The Nuclear localization signal motif lies at 78–101; that stretch reads KKEIARQMKAYEKQRGARREEQKE. The tract at residues 126-156 is disordered; sequence LNPFTPKAASAGNGPDDAQPGSSAGPAGKDK.

This sequence belongs to the NOSIP family. As to quaternary structure, interacts with NOS1 and NOS3. Interacts with PP2A holoenzyme, containing PPP2CA, PPP2CB, PPP2R1A and PPP2R2A subunits.

It localises to the cytoplasm. The protein localises to the nucleus. The catalysed reaction is S-ubiquitinyl-[E2 ubiquitin-conjugating enzyme]-L-cysteine + [acceptor protein]-L-lysine = [E2 ubiquitin-conjugating enzyme]-L-cysteine + N(6)-ubiquitinyl-[acceptor protein]-L-lysine.. In terms of biological role, E3 ubiquitin-protein ligase that is essential for proper development of the forebrain, the eye, and the face. Catalyzes monoubiquitination of serine/threonine-protein phosphatase 2A (PP2A) catalytic subunit PPP2CA/PPP2CB. Negatively regulates nitric oxide production by inducing NOS1 and NOS3 translocation to actin cytoskeleton and inhibiting their enzymatic activity. This is Nitric oxide synthase-interacting protein (NOSIP) from Bos taurus (Bovine).